The chain runs to 81 residues: ATP synthase subunit c, chloroplastic (81 aa).

The next 2 membrane-spanning stretches (helical) occupy residues 3-23 and 57-77; these read PLVFAASVIAAGLAVGLASIG and LAFMEALTIYGLVVALALLFA.

The protein belongs to the ATPase C chain family. In terms of assembly, F-type ATPases have 2 components, F(1) - the catalytic core - and F(0) - the membrane proton channel. F(1) has five subunits: alpha(3), beta(3), gamma(1), delta(1), epsilon(1). F(0) has four main subunits: a(1), b(1), b'(1) and c(10-14). The alpha and beta chains form an alternating ring which encloses part of the gamma chain. F(1) is attached to F(0) by a central stalk formed by the gamma and epsilon chains, while a peripheral stalk is formed by the delta, b and b' chains.

The protein localises to the plastid. It localises to the chloroplast thylakoid membrane. In terms of biological role, f(1)F(0) ATP synthase produces ATP from ADP in the presence of a proton or sodium gradient. F-type ATPases consist of two structural domains, F(1) containing the extramembraneous catalytic core and F(0) containing the membrane proton channel, linked together by a central stalk and a peripheral stalk. During catalysis, ATP synthesis in the catalytic domain of F(1) is coupled via a rotary mechanism of the central stalk subunits to proton translocation. Key component of the F(0) channel; it plays a direct role in translocation across the membrane. A homomeric c-ring of between 10-14 subunits forms the central stalk rotor element with the F(1) delta and epsilon subunits. The polypeptide is ATP synthase subunit c, chloroplastic (Atropa belladonna (Belladonna)).